The sequence spans 778 residues: Endonuclease MutS2 (778 aa).

An ATP-binding site is contributed by 329 to 336; that stretch reads GPNTGGKT. Positions 703-778 constitute a Smr domain; the sequence is LDLRGKRYEE…GSGCTIVTFK (76 aa).

The protein belongs to the DNA mismatch repair MutS family. MutS2 subfamily. As to quaternary structure, homodimer. Binds to stalled ribosomes, contacting rRNA.

In terms of biological role, endonuclease that is involved in the suppression of homologous recombination and thus may have a key role in the control of bacterial genetic diversity. Its function is as follows. Acts as a ribosome collision sensor, splitting the ribosome into its 2 subunits. Detects stalled/collided 70S ribosomes which it binds and splits by an ATP-hydrolysis driven conformational change. Acts upstream of the ribosome quality control system (RQC), a ribosome-associated complex that mediates the extraction of incompletely synthesized nascent chains from stalled ribosomes and their subsequent degradation. Probably generates substrates for RQC. The sequence is that of Endonuclease MutS2 from Streptococcus suis (strain 98HAH33).